The primary structure comprises 434 residues: Serine/threonine transporter SstT (434 aa).

9 helical membrane passes run 14 to 34, 41 to 61, 72 to 92, 135 to 155, 172 to 192, 210 to 230, 282 to 302, 316 to 336, and 351 to 371; these read IVIG…WSFI, FVGA…MSAI, FGTV…AAVA, ALVE…GSGL, TVSA…VGLL, LLML…PFMV, ISIP…VSIM, IFLA…VSGI, and FGIS…IGVV. The segment at 413 to 434 is disordered; that stretch reads GKGTAEVVTPEKTNEAEESEQV.

This sequence belongs to the dicarboxylate/amino acid:cation symporter (DAACS) (TC 2.A.23) family.

The protein localises to the cell membrane. The catalysed reaction is L-serine(in) + Na(+)(in) = L-serine(out) + Na(+)(out). It carries out the reaction L-threonine(in) + Na(+)(in) = L-threonine(out) + Na(+)(out). Involved in the import of serine and threonine into the cell, with the concomitant import of sodium (symport system). This is Serine/threonine transporter SstT from Lacticaseibacillus casei (strain BL23) (Lactobacillus casei).